The following is a 360-amino-acid chain: WAT1-related protein At3g28070 (360 aa).

10 helical membrane-spanning segments follow: residues 15-35 (AVFLTAMLVVETSVVGISTLF), 45-65 (IYPFLGYSYLLASLLLLPSLF), 84-104 (IGLLGFLGSMYVITGYIGIEY), 108-128 (TLASAINNITPALTFILAIIF), 140-160 (SLAKLMGTILSLIGALVVIFY), 190-210 (WLIGGALLTMQGIFVSVSFIL), 224-244 (VSFLYTVCVSIVTSTIGLVVE), 248-268 (PSVWIIHFDITLITIVTMAIV), 286-306 (LYLAIFKPLSILIAVVMGAIF), and 311-331 (LYLGCLIGGILITLGFYAVMW). Positions 30 to 158 (GISTLFKFAT…LSLIGALVVI (129 aa)) constitute an EamA domain.

Belongs to the drug/metabolite transporter (DMT) superfamily. Plant drug/metabolite exporter (P-DME) (TC 2.A.7.4) family.

The protein resides in the membrane. This Arabidopsis thaliana (Mouse-ear cress) protein is WAT1-related protein At3g28070.